A 189-amino-acid polypeptide reads, in one-letter code: Thymidine kinase (189 aa).

Residues 9-16 and 85-88 contribute to the ATP site; these read GTMNSGKT and DESQ. The active-site Proton acceptor is Glu86. 4 residues coordinate Zn(2+): Cys143, Cys146, Cys180, and His183.

It belongs to the thymidine kinase family. Homotetramer.

It is found in the cytoplasm. It catalyses the reaction thymidine + ATP = dTMP + ADP + H(+). This chain is Thymidine kinase, found in Streptococcus pyogenes serotype M1.